Consider the following 192-residue polypeptide: Adenylate kinase (192 aa).

Residue 11–16 participates in ATP binding; it reads GSGKGT. Residues 31-60 are NMP; sequence STGDIFRANVKGETPLGIEAKKYMDNGDFV. Residues T32, R37, 58–60, 86–89, and Q93 each bind AMP; these read DFV and GYPR. Residues 127–137 are LID; that stretch reads GRAKETGRSDD. R128 contacts ATP. R134 and R145 together coordinate AMP. Residue G173 participates in ATP binding.

This sequence belongs to the adenylate kinase family. As to quaternary structure, monomer.

It is found in the cytoplasm. It carries out the reaction AMP + ATP = 2 ADP. It functions in the pathway purine metabolism; AMP biosynthesis via salvage pathway; AMP from ADP: step 1/1. Catalyzes the reversible transfer of the terminal phosphate group between ATP and AMP. Plays an important role in cellular energy homeostasis and in adenine nucleotide metabolism. The protein is Adenylate kinase of Pseudarthrobacter chlorophenolicus (strain ATCC 700700 / DSM 12829 / CIP 107037 / JCM 12360 / KCTC 9906 / NCIMB 13794 / A6) (Arthrobacter chlorophenolicus).